The chain runs to 413 residues: Multifunctional CCA protein (413 aa).

ATP-binding residues include G8 and R11. Positions 8 and 11 each coordinate CTP. Mg(2+) contacts are provided by D21 and D23. Positions 91, 143, and 146 each coordinate ATP. Residues R91, R143, and R146 each contribute to the CTP site. The 102-residue stretch at 232–333 (TGVHVMMVVD…VRLFERSDAL (102 aa)) folds into the HD domain.

It belongs to the tRNA nucleotidyltransferase/poly(A) polymerase family. Bacterial CCA-adding enzyme type 1 subfamily. In terms of assembly, monomer. Can also form homodimers and oligomers. It depends on Mg(2+) as a cofactor. Ni(2+) is required as a cofactor.

The enzyme catalyses a tRNA precursor + 2 CTP + ATP = a tRNA with a 3' CCA end + 3 diphosphate. The catalysed reaction is a tRNA with a 3' CCA end + 2 CTP + ATP = a tRNA with a 3' CCACCA end + 3 diphosphate. In terms of biological role, catalyzes the addition and repair of the essential 3'-terminal CCA sequence in tRNAs without using a nucleic acid template. Adds these three nucleotides in the order of C, C, and A to the tRNA nucleotide-73, using CTP and ATP as substrates and producing inorganic pyrophosphate. tRNA 3'-terminal CCA addition is required both for tRNA processing and repair. Also involved in tRNA surveillance by mediating tandem CCA addition to generate a CCACCA at the 3' terminus of unstable tRNAs. While stable tRNAs receive only 3'-terminal CCA, unstable tRNAs are marked with CCACCA and rapidly degraded. The sequence is that of Multifunctional CCA protein from Burkholderia cenocepacia (strain ATCC BAA-245 / DSM 16553 / LMG 16656 / NCTC 13227 / J2315 / CF5610) (Burkholderia cepacia (strain J2315)).